A 726-amino-acid chain; its full sequence is Transcription factor 12 (726 aa).

Disordered stretches follow at residues 27-75 (SPPV…SRGF), 89-223 (LVSH…TFFD), 243-267 (YGGMLGGSSSHMPQSGNYSNLHSHD), 289-309 (SSFHRSSASTSPFVTASHTPP), 345-367 (PDHTSSSFPSNPSTPVGSPSPLA), 380-409 (TASGPAGRAGTTQWTRATGQAPSSPSYENS), 501-532 (MGSVHREESGSLNNNNHSALQASAAPTSSSEL), 558-624 (VENQ…ERRM), and 694-726 (EEEKVSGVSGDPQQAHPAVHPGLTDTSNPMGHL). Residues 29-47 (PVNSGKNRPTTLGSSQFTA) show a composition bias toward polar residues. A compositionally biased stretch (low complexity) spans 55-74 (SQASWASGGQSSPSFESSRG). Polar residues-rich tracts occupy residues 145-157 (PGKSPTPFYSYTG), 249-263 (GSSSHMPQSGNYSNL), and 291-309 (FHRSSASTSPFVTASHTPP). Over residues 348–359 (TSSSFPSNPSTP) the composition is skewed to low complexity. Polar residues-rich tracts occupy residues 389-409 (GTTQWTRATGQAPSSPSYENS) and 510-532 (GSLNNNNHSALQASAAPTSSSEL). A compositionally biased stretch (basic and acidic residues) spans 559–575 (ENQDKDDMHDSHASDDL). Residues 592–603 (SSRPSCELSCSS) show a composition bias toward low complexity. The span at 612 to 624 (PEQKAERERERRM) shows a compositional bias: basic and acidic residues. The bHLH domain occupies 621–674 (ERRMANNARERLRVRDINEAFKELGRMCQLHLKSEKPQTKLLILHQAVAVILSL). The interval 676-699 (QQVRERNLNPKAACLKRREEEKVS) is class A specific domain. The span at 717–726 (TDTSNPMGHL) shows a compositional bias: polar residues.

As to quaternary structure, efficient DNA binding requires dimerization with another bHLH protein.

The protein localises to the nucleus. In terms of biological role, transcriptional regulator. Involved in the initiation of neuronal differentiation. Activates transcription by binding to the E box (5'-CANNTG-3'). May be involved in the functional network that regulates the development of the GnRH axis. The chain is Transcription factor 12 (tcf12) from Danio rerio (Zebrafish).